Reading from the N-terminus, the 433-residue chain is UPF0761 membrane protein Sde_0901 (433 aa).

Transmembrane regions (helical) follow at residues 46–66 (LFAM…FPAF), 103–123 (LSAA…TNIE), 142–162 (FLLY…GLAM), 185–205 (FFSY…FAAV), 217–237 (IGGI…GWVV), and 247–267 (GAFA…MIIL).

It belongs to the UPF0761 family.

Its subcellular location is the cell inner membrane. This Saccharophagus degradans (strain 2-40 / ATCC 43961 / DSM 17024) protein is UPF0761 membrane protein Sde_0901.